The primary structure comprises 631 residues: Eukaryotic translation initiation factor 2-alpha kinase 1 (631 aa).

A disordered region spans residues 1–34 (MQGGNSGVRKREEEGGGEGAVAAPPAIDFPAESS). The SIFI-degron signature appears at 85–104 (LRSRQVFKLLCQTFIKMGLL). The Protein kinase domain maps to 167–583 (FEEVAILGKG…AVQLLQSELF (417 aa)). Residues 173-181 (LGKGGYGRV) and K196 each bind ATP. The segment at 260 to 301 (QEEDREQYDVKNDESSSSSIVFAEPTPEKGKRFGESDTENQN) is disordered. Position 285 is a phosphothreonine (T285). A compositionally biased stretch (basic and acidic residues) spans 285 to 301 (TPEKGKRFGESDTENQN). The HRM 1 repeat unit spans residues 410–415 (ACPYVM). The active-site Proton acceptor is D442. T486 and T488 each carry phosphothreonine; by autocatalysis. At T493 the chain carries Phosphothreonine. An HRM 2 repeat occupies 552-557 (RCPVQA).

This sequence belongs to the protein kinase superfamily. Ser/Thr protein kinase family. GCN2 subfamily. In terms of assembly, synthesized in an inactive form that binds to the N-terminal domain of CDC37. Has to be associated with a multiprotein complex containing Hsp90, CDC37 and PPP5C for maturation and activation by autophosphorylation. The phosphatase PPP5C modulates this activation. Homodimer; homodimerizes in presence of heme, forming a disulfide-linked inactive homodimer. Interacts with DELE1; binds both to full-length DELE1 and processed form of DELE1 (S-DELE1) in response to stress, leading to activate its protein kinase activity and trigger the integrated stress response (ISR). In terms of processing, activated by autophosphorylation; phosphorylated predominantly on serine and threonine residues, but also on tyrosine residues. Autophosphorylation at Thr-488 is required for kinase activation. The active autophosphorylated form apparently is largely refractory to cellular heme fluctuations. Post-translationally, ubiquitinated and degraded by the SIFI complex once the mitochondrial stress has been resolved, thereby providing stress response silencing. Within the SIFI complex, UBR4 initiates ubiquitin chain that are further elongated or branched by KCMF1.

The protein resides in the cytoplasm. The catalysed reaction is L-seryl-[protein] + ATP = O-phospho-L-seryl-[protein] + ADP + H(+). The enzyme catalyses L-threonyl-[protein] + ATP = O-phospho-L-threonyl-[protein] + ADP + H(+). In normal conditions, the protein kinase activity is inhibited; inhibition is relieved by various stress conditions. Inhibited by heme: in presence of heme, forms a disulfide-linked inactive homodimer. Heme depletion relieves inhibition and stimulates kinase activity by autophosphorylation. Inhibited by the heme metabolites biliverdin and bilirubin. Induced by oxidative stress generated by arsenite treatment. Binding of nitric oxide (NO) to the heme iron in the N-terminal heme-binding domain activates the kinase activity, while binding of carbon monoxide (CO) suppresses kinase activity. Protein kinase activity is also activated upon binding to DELE1 in response to various stress, triggering the integrated stress response (ISR): activated by full-length DELE1 in response to iron deficiency, while it is activated by the processed form of DELE1 (S-DELE1) in response to mitochondrial stress. Metabolic-stress sensing protein kinase that phosphorylates the alpha subunit of eukaryotic translation initiation factor 2 (EIF2S1/eIF-2-alpha) in response to various stress conditions. Key activator of the integrated stress response (ISR) required for adaptation to various stress, such as heme deficiency, oxidative stress, osmotic shock, mitochondrial dysfunction and heat shock. EIF2S1/eIF-2-alpha phosphorylation in response to stress converts EIF2S1/eIF-2-alpha in a global protein synthesis inhibitor, leading to a global attenuation of cap-dependent translation, while concomitantly initiating the preferential translation of ISR-specific mRNAs, such as the transcriptional activator ATF4, and hence allowing ATF4-mediated reprogramming. Acts as a key sensor of heme-deficiency: in normal conditions, binds hemin via a cysteine thiolate and histidine nitrogenous coordination, leading to inhibit the protein kinase activity. This binding occurs with moderate affinity, allowing it to sense the heme concentration within the cell: heme depletion relieves inhibition and stimulates kinase activity, activating the ISR. Thanks to this unique heme-sensing capacity, plays a crucial role to shut off protein synthesis during acute heme-deficient conditions. In red blood cells (RBCs), controls hemoglobin synthesis ensuring a coordinated regulation of the synthesis of its heme and globin moieties. It thereby plays an essential protective role for RBC survival in anemias of iron deficiency. Iron deficiency also triggers activation by full-length DELE1. Also activates the ISR in response to mitochondrial dysfunction: HRI/EIF2AK1 protein kinase activity is activated upon binding to the processed form of DELE1 (S-DELE1), thereby promoting the ATF4-mediated reprogramming. Also acts as an activator of mitophagy in response to mitochondrial damage: catalyzes phosphorylation of eIF-2-alpha (EIF2S1) following activation by S-DELE1, thereby promoting mitochondrial localization of EIF2S1, triggering PRKN-independent mitophagy. The chain is Eukaryotic translation initiation factor 2-alpha kinase 1 from Macaca fascicularis (Crab-eating macaque).